Reading from the N-terminus, the 1028-residue chain is Golgin subfamily A member 2 (1028 aa).

The interval 1–112 (MADQNRQIKL…NRPLSSTESL (112 aa)) is disordered. A compositionally biased stretch (basic and acidic residues) spans 40 to 60 (KGDQTDAPADRRSPENERVDV). Residues 74-87 (NPASAINTDNSAPQ) are compositionally biased toward polar residues. Coiled-coil stretches lie at residues 162-200 (NTQL…EQGA), 233-388 (ARQK…YAVQ), 414-690 (RDST…LLNG), 738-769 (LSRV…LTAL), and 799-840 (HEAL…LSGE). Residues 259–280 (RTLSSVSTQQKQHERHNKELEK) are disordered. Residues 756–791 (RRIHQDTRQQLTALSHDHHHHHHHEPHSTCAETDGS) form a disordered region. Residues 944–981 (AMDVSSSPQSSTAEIQSQSSERPAADPISSPSLRPQED) form a disordered region. Positions 945–964 (MDVSSSPQSSTAEIQSQSSE) are enriched in polar residues.

This sequence belongs to the GOLGA2 family.

Its subcellular location is the golgi apparatus. The protein resides in the cis-Golgi network membrane. It is found in the endoplasmic reticulum-Golgi intermediate compartment membrane. It localises to the cytoplasm. The protein localises to the cytoskeleton. Its subcellular location is the spindle pole. In terms of biological role, peripheral membrane component of the cis-Golgi stack that acts as a membrane skeleton that maintains the structure of the Golgi apparatus, and as a vesicle thether that facilitates vesicle fusion to the Golgi membrane. Required for normal protein transport from the endoplasmic reticulum to the Golgi apparatus and the cell membrane. Plays a central role in mitotic Golgi disassembly. Also plays a key role in spindle pole assembly and centrosome organization. It probably promotes mitotic spindle pole assembly by activating assembly factors to nucleate microtubules around the Golgi and capture them to couple mitotic membranes to the spindle. Also required for the Golgi ribbon formation and glycosylation of membrane and secretory proteins. This chain is Golgin subfamily A member 2, found in Danio rerio (Zebrafish).